A 312-amino-acid polypeptide reads, in one-letter code: Glutaminase (312 aa).

The substrate site is built by Ser67, Asn118, Glu162, Asn169, Tyr193, Tyr245, and Val263.

Belongs to the glutaminase family. Homotetramer.

The enzyme catalyses L-glutamine + H2O = L-glutamate + NH4(+). In Bordetella avium (strain 197N), this protein is Glutaminase.